A 359-amino-acid polypeptide reads, in one-letter code: Mannose-1-phosphate guanylyltransferase catalytic subunit beta (359 aa).

A substrate-binding domain region spans residues 2–221; it reads KALILVGGFG…EGFWMDVGQP (220 aa). Position 109 (Asp-109) interacts with GDP-alpha-D-mannose. Asp-109 is a Mg(2+) binding site. Residue Lys-161 is part of the active site. Residue Asp-217 participates in GDP-alpha-D-mannose binding. Mg(2+) is bound at residue Asp-217. Residues 244 to 359 form a hexapeptide repeat domain region; sequence ATGNGIIGPV…SSIPEPEIIM (116 aa).

It belongs to the transferase hexapeptide repeat family. As to quaternary structure, component of the GMPPA-GMPPB mannose-1-phosphate guanylyltransferase complex composed of 4 GMPPA subunits and 8 gmppB subunits; the complex is organized into three layers, a central layer made up of 2 gmppA dimers sandwiched between two layers each made up of 2 gmppB dimers. gmppB catalytic activity is reduced when part of the complex and binding of GDP-alpha-D-Mannose by gmppA induces allosteric feedback inhibition of gmppB. Requires Mg(2+) as cofactor.

It carries out the reaction alpha-D-mannose 1-phosphate + GTP + H(+) = GDP-alpha-D-mannose + diphosphate. It participates in nucleotide-sugar biosynthesis; GDP-alpha-D-mannose biosynthesis; GDP-alpha-D-mannose from alpha-D-mannose 1-phosphate (GTP route): step 1/1. Its activity is regulated as follows. Enzyme activity is reduced by incorporation into the GMPPA-GMPPB mannose-1-phosphate guanylyltransferase complex. Allosterically inhibited, when part of the GMPPA-GMPPB complex, by GDP-alpha-D-mannose binding to GMPPA. Catalytic subunit of the GMPPA-GMPPB mannose-1-phosphate guanylyltransferase complex. Catalyzes the formation of GDP-mannose, an essential precursor of glycan moieties of glycoproteins and glycolipids. Can catalyze the reverse reaction in vitro. Together with GMPPA regulates GDP-alpha-D-mannose levels. This Dictyostelium discoideum (Social amoeba) protein is Mannose-1-phosphate guanylyltransferase catalytic subunit beta (gmppB).